We begin with the raw amino-acid sequence, 65 residues long: Large ribosomal subunit protein bL31 (65 aa).

Residues cysteine 16, cysteine 18, cysteine 36, and cysteine 39 each contribute to the Zn(2+) site.

The protein belongs to the bacterial ribosomal protein bL31 family. Type A subfamily. In terms of assembly, part of the 50S ribosomal subunit. The cofactor is Zn(2+).

Functionally, binds the 23S rRNA. The protein is Large ribosomal subunit protein bL31 of Geotalea daltonii (strain DSM 22248 / JCM 15807 / FRC-32) (Geobacter daltonii).